The primary structure comprises 165 residues: Large ribosomal subunit protein uL10 (165 aa).

Belongs to the universal ribosomal protein uL10 family. In terms of assembly, part of the ribosomal stalk of the 50S ribosomal subunit. The N-terminus interacts with L11 and the large rRNA to form the base of the stalk. The C-terminus forms an elongated spine to which L12 dimers bind in a sequential fashion forming a multimeric L10(L12)X complex.

Functionally, forms part of the ribosomal stalk, playing a central role in the interaction of the ribosome with GTP-bound translation factors. This is Large ribosomal subunit protein uL10 from Dechloromonas aromatica (strain RCB).